Reading from the N-terminus, the 336-residue chain is Aromatic prenyltransferase (336 aa).

This sequence belongs to the aromatic prenyltransferase family.

In terms of biological role, prenyltransferase that attaches isoprenoid moieties to carbon atoms of aromatic substrates in an enzyme-catalyzed Friedel-Crafts reaction. Shows specificity for dimethylallyl diphosphate (DMAPP) and does not accept geranyl diphosphate (GPP) or isopentenyl diphosphate (IPP). Prenylates the artificial substrate 2,7-dihydroxynaphthalene (2,7-DHN), as well as dihydrophenazine-1-carboxylic acid at a lower level. Only traces of products are detected with aspulvinone E, flaviolin, or 4-hydroxybenzoic acid as substrates; and no product is formed with L-tryptophan, L-tyrosine, or 4-hydroxyphenylpyruvate. Ptf seems no to be involved in the prenylation reaction in the biosynthesis of aspulvinone H and J and the physiological function of ptf remains unknown. The sequence is that of Aromatic prenyltransferase from Aspergillus terreus (strain NIH 2624 / FGSC A1156).